Here is a 230-residue protein sequence, read N- to C-terminus: Cytochrome b6-f complex iron-sulfur subunit, chloroplastic (230 aa).

Residues 1 to 50 constitute a chloroplast transit peptide; that stretch reads MSSTTLSPTTPSQLCSGKSGISCPSIALLVKPTRTQMTGRGNKGMKITCQ. The chain crosses the membrane as a helical span at residues 72-92; that stretch reads LLGALSLPTAGMLVPYGSFLV. One can recognise a Rieske domain in the interval 115 to 213; it reads ATEWLKTHAP…VGVEDGKVVF (99 aa). Residues Cys157, His159, Cys175, and His178 each coordinate [2Fe-2S] cluster. Cys162 and Cys177 are joined by a disulfide.

It belongs to the Rieske iron-sulfur protein family. As to quaternary structure, the 4 large subunits of the cytochrome b6-f complex are cytochrome b6, subunit IV (17 kDa polypeptide, petD), cytochrome f and the Rieske protein, while the 4 small subunits are petG, petL, petM and petN. The complex functions as a dimer. [2Fe-2S] cluster serves as cofactor.

The protein resides in the plastid. It localises to the chloroplast thylakoid membrane. The enzyme catalyses 2 oxidized [plastocyanin] + a plastoquinol + 2 H(+)(in) = 2 reduced [plastocyanin] + a plastoquinone + 4 H(+)(out). Component of the cytochrome b6-f complex, which mediates electron transfer between photosystem II (PSII) and photosystem I (PSI), cyclic electron flow around PSI, and state transitions. This chain is Cytochrome b6-f complex iron-sulfur subunit, chloroplastic (petC), found in Pisum sativum (Garden pea).